The sequence spans 165 residues: Cell division protein SepF (165 aa).

The segment at 23–75 is disordered; it reads DEYGDYAGDYETQETAPVATRSSKRESRPAPVSDLSERRRPASGPTGVVAELS.

The protein belongs to the SepF family. In terms of assembly, homodimer. Interacts with FtsZ.

The protein resides in the cytoplasm. In terms of biological role, cell division protein that is part of the divisome complex and is recruited early to the Z-ring. Probably stimulates Z-ring formation, perhaps through the cross-linking of FtsZ protofilaments. Its function overlaps with FtsA. The sequence is that of Cell division protein SepF from Nocardioides sp. (strain ATCC BAA-499 / JS614).